A 187-amino-acid polypeptide reads, in one-letter code: MSKQEQIEQTIYQLLELLGEDPNREGLLDTPKRVAKMYLEMFNGLEEDPKDQFTAVFSEGHEEVVLVKDIPFHSMCEHHLVPFYGIAHVAYIPSKGRVTGLSKLARAVEVASRRPQLQERLTHQVAHALQDALEPEGVFVMVEAEHMCMSMRGIRKPGSKTVTTVALGKYKEDAILRRELLSMIHNK.

The Zn(2+) site is built by C76, H79, and C148.

It belongs to the GTP cyclohydrolase I family. Toroid-shaped homodecamer, composed of two pentamers of five dimers.

It catalyses the reaction GTP + H2O = 7,8-dihydroneopterin 3'-triphosphate + formate + H(+). It functions in the pathway cofactor biosynthesis; 7,8-dihydroneopterin triphosphate biosynthesis; 7,8-dihydroneopterin triphosphate from GTP: step 1/1. The sequence is that of GTP cyclohydrolase 1 from Streptococcus suis (strain 98HAH33).